A 545-amino-acid polypeptide reads, in one-letter code: Protein disulfide isomerase-like 1-3 (545 aa).

Positions M1–S16 are enriched in pro residues. The disordered stretch occupies residues M1–S24. Positions A55–G189 constitute a Thioredoxin 1 domain. N-linked (GlcNAc...) asparagine glycosylation is present at N87. Residues C107 and C110 each act as nucleophile in the active site. An intrachain disulfide couples C107 to C110. A glycan (N-linked (GlcNAc...) asparagine) is linked at N349. Residues F403–L545 enclose the Thioredoxin 2 domain. Active-site nucleophile residues include C453 and C456. A disulfide bond links C453 and C456. Positions K542–L545 match the Prevents secretion from ER motif.

Belongs to the protein disulfide isomerase family.

It is found in the endoplasmic reticulum lumen. The enzyme catalyses Catalyzes the rearrangement of -S-S- bonds in proteins.. In terms of biological role, acts as a protein-folding catalyst that interacts with nascent polypeptides to catalyze the formation, isomerization, and reduction or oxidation of disulfide bonds. May play a role in storage protein biogenesis. The protein is Protein disulfide isomerase-like 1-3 (PDIL1-3) of Oryza sativa subsp. japonica (Rice).